Reading from the N-terminus, the 316-residue chain is Small ribosomal subunit protein RACK1 (316 aa).

WD repeat units follow at residues 4–46 (QMTL…WRLT), 52–93 (YGVP…WDLS), 94–135 (TGQT…WNTL), 137–180 (VCKY…WNLT), 181–221 (NCKL…LWDL), 222–263 (NEGK…WDLE), and 264–312 (GKVV…WQVS).

The protein belongs to the WD repeat G protein beta family. Ribosomal protein RACK1 subfamily.

This Biomphalaria glabrata (Bloodfluke planorb) protein is Small ribosomal subunit protein RACK1.